The chain runs to 492 residues: N-succinylglutamate 5-semialdehyde dehydrogenase (492 aa).

Residue 220-225 coordinates NAD(+); sequence GSANTG. Residues Glu-243 and Cys-277 contribute to the active site.

It belongs to the aldehyde dehydrogenase family. AstD subfamily.

It catalyses the reaction N-succinyl-L-glutamate 5-semialdehyde + NAD(+) + H2O = N-succinyl-L-glutamate + NADH + 2 H(+). The protein operates within amino-acid degradation; L-arginine degradation via AST pathway; L-glutamate and succinate from L-arginine: step 4/5. Functionally, catalyzes the NAD-dependent reduction of succinylglutamate semialdehyde into succinylglutamate. The polypeptide is N-succinylglutamate 5-semialdehyde dehydrogenase (Escherichia coli O157:H7).